Reading from the N-terminus, the 347-residue chain is Holliday junction branch migration complex subunit RuvB (347 aa).

Residues 1–183 (MSDERVVTPR…FGSVHRLEFY (183 aa)) are large ATPase domain (RuvB-L). Residues leucine 22, arginine 23, glycine 64, lysine 67, threonine 68, serine 69, 130-132 (EDF), arginine 173, tyrosine 183, and arginine 220 each bind ATP. A Mg(2+)-binding site is contributed by threonine 68. The tract at residues 184 to 254 (SVDALYEIVM…VARDALAKLE (71 aa)) is small ATPAse domain (RuvB-S). The head domain (RuvB-H) stretch occupies residues 257–347 (HLGLDENDRR…NGAEQGRLWT (91 aa)). Residues arginine 312 and arginine 317 each coordinate DNA.

The protein belongs to the RuvB family. Homohexamer. Forms an RuvA(8)-RuvB(12)-Holliday junction (HJ) complex. HJ DNA is sandwiched between 2 RuvA tetramers; dsDNA enters through RuvA and exits via RuvB. An RuvB hexamer assembles on each DNA strand where it exits the tetramer. Each RuvB hexamer is contacted by two RuvA subunits (via domain III) on 2 adjacent RuvB subunits; this complex drives branch migration. In the full resolvosome a probable DNA-RuvA(4)-RuvB(12)-RuvC(2) complex forms which resolves the HJ.

The protein resides in the cytoplasm. It carries out the reaction ATP + H2O = ADP + phosphate + H(+). The RuvA-RuvB-RuvC complex processes Holliday junction (HJ) DNA during genetic recombination and DNA repair, while the RuvA-RuvB complex plays an important role in the rescue of blocked DNA replication forks via replication fork reversal (RFR). RuvA specifically binds to HJ cruciform DNA, conferring on it an open structure. The RuvB hexamer acts as an ATP-dependent pump, pulling dsDNA into and through the RuvAB complex. RuvB forms 2 homohexamers on either side of HJ DNA bound by 1 or 2 RuvA tetramers; 4 subunits per hexamer contact DNA at a time. Coordinated motions by a converter formed by DNA-disengaged RuvB subunits stimulates ATP hydrolysis and nucleotide exchange. Immobilization of the converter enables RuvB to convert the ATP-contained energy into a lever motion, pulling 2 nucleotides of DNA out of the RuvA tetramer per ATP hydrolyzed, thus driving DNA branch migration. The RuvB motors rotate together with the DNA substrate, which together with the progressing nucleotide cycle form the mechanistic basis for DNA recombination by continuous HJ branch migration. Branch migration allows RuvC to scan DNA until it finds its consensus sequence, where it cleaves and resolves cruciform DNA. The chain is Holliday junction branch migration complex subunit RuvB from Roseiflexus castenholzii (strain DSM 13941 / HLO8).